We begin with the raw amino-acid sequence, 138 residues long: Protein NrdI (138 aa).

The protein belongs to the NrdI family.

In terms of biological role, probably involved in ribonucleotide reductase function. The protein is Protein NrdI of Mycobacterium leprae (strain TN).